Consider the following 475-residue polypeptide: Sulfate adenylyltransferase subunit 1 (475 aa).

The tr-type G domain maps to 24–240; it reads KSLLRFLTCG…ESAEVERELE (217 aa). The G1 stretch occupies residues 33-40; it reads GSVDDGKS. 33–40 is a binding site for GTP; that stretch reads GSVDDGKS. The interval 91–95 is G2; the sequence is GITID. The interval 112–115 is G3; sequence DTPG. GTP is bound by residues 112–116 and 167–170; these read DTPGH and NKMD. The G4 stretch occupies residues 167 to 170; the sequence is NKMD. The segment at 204–206 is G5; the sequence is SAL.

This sequence belongs to the TRAFAC class translation factor GTPase superfamily. Classic translation factor GTPase family. CysN/NodQ subfamily. In terms of assembly, heterodimer composed of CysD, the smaller subunit, and CysN.

The enzyme catalyses sulfate + ATP + H(+) = adenosine 5'-phosphosulfate + diphosphate. The protein operates within sulfur metabolism; hydrogen sulfide biosynthesis; sulfite from sulfate: step 1/3. With CysD forms the ATP sulfurylase (ATPS) that catalyzes the adenylation of sulfate producing adenosine 5'-phosphosulfate (APS) and diphosphate, the first enzymatic step in sulfur assimilation pathway. APS synthesis involves the formation of a high-energy phosphoric-sulfuric acid anhydride bond driven by GTP hydrolysis by CysN coupled to ATP hydrolysis by CysD. This chain is Sulfate adenylyltransferase subunit 1, found in Aeromonas hydrophila subsp. hydrophila (strain ATCC 7966 / DSM 30187 / BCRC 13018 / CCUG 14551 / JCM 1027 / KCTC 2358 / NCIMB 9240 / NCTC 8049).